The sequence spans 247 residues: Adenosylcobinamide-GDP ribazoletransferase (247 aa).

5 consecutive transmembrane segments (helical) span residues 34-54 (IITF…VFMV), 59-79 (CGVP…TGGF), 113-133 (GGLA…ELAL), 138-158 (ILAL…LLMY), and 194-214 (VLLP…AIFI).

Belongs to the CobS family. It depends on Mg(2+) as a cofactor.

It localises to the cell inner membrane. It catalyses the reaction alpha-ribazole + adenosylcob(III)inamide-GDP = adenosylcob(III)alamin + GMP + H(+). The enzyme catalyses alpha-ribazole 5'-phosphate + adenosylcob(III)inamide-GDP = adenosylcob(III)alamin 5'-phosphate + GMP + H(+). It participates in cofactor biosynthesis; adenosylcobalamin biosynthesis; adenosylcobalamin from cob(II)yrinate a,c-diamide: step 7/7. In terms of biological role, joins adenosylcobinamide-GDP and alpha-ribazole to generate adenosylcobalamin (Ado-cobalamin). Also synthesizes adenosylcobalamin 5'-phosphate from adenosylcobinamide-GDP and alpha-ribazole 5'-phosphate. The polypeptide is Adenosylcobinamide-GDP ribazoletransferase (Shigella boydii serotype 4 (strain Sb227)).